The sequence spans 215 residues: MRSIANKKLVIATHNIGKLQEITTLVAPFGLTIQSAKELGLPEPKETGTTFEENAYIKAFAAAKNTGLPALSDDSGLEVDALNGAPGVYTADLALQSDGTRDFLKAMQKIEEKLQKIGAHKKSQRKCRFISVICIAWPDAHADYFHGRVEGSFIWPPRGDKGFGFDPVFLPDGYKNTFGEMTTEQKHGWKLNDQTPLSHRACAFKLLAENLLKLS.

13-18 (THNIGK) contacts substrate. Asp-74 (proton acceptor) is an active-site residue. Asp-74 is a binding site for Mg(2+). Substrate is bound by residues Ser-75, 163 to 166 (FGFD), Lys-186, and 199 to 200 (HR).

Belongs to the HAM1 NTPase family. Homodimer. Requires Mg(2+) as cofactor.

It catalyses the reaction XTP + H2O = XMP + diphosphate + H(+). It carries out the reaction dITP + H2O = dIMP + diphosphate + H(+). The catalysed reaction is ITP + H2O = IMP + diphosphate + H(+). Its function is as follows. Pyrophosphatase that catalyzes the hydrolysis of nucleoside triphosphates to their monophosphate derivatives, with a high preference for the non-canonical purine nucleotides XTP (xanthosine triphosphate), dITP (deoxyinosine triphosphate) and ITP. Seems to function as a house-cleaning enzyme that removes non-canonical purine nucleotides from the nucleotide pool, thus preventing their incorporation into DNA/RNA and avoiding chromosomal lesions. This Bartonella henselae (strain ATCC 49882 / DSM 28221 / CCUG 30454 / Houston 1) (Rochalimaea henselae) protein is dITP/XTP pyrophosphatase.